The sequence spans 282 residues: Bifunctional protein FolD (282 aa).

NADP(+) is bound by residues 162–164 (GRS), Ser-187, and Val-228.

It belongs to the tetrahydrofolate dehydrogenase/cyclohydrolase family. Homodimer.

It carries out the reaction (6R)-5,10-methylene-5,6,7,8-tetrahydrofolate + NADP(+) = (6R)-5,10-methenyltetrahydrofolate + NADPH. The enzyme catalyses (6R)-5,10-methenyltetrahydrofolate + H2O = (6R)-10-formyltetrahydrofolate + H(+). Its pathway is one-carbon metabolism; tetrahydrofolate interconversion. Its function is as follows. Catalyzes the oxidation of 5,10-methylenetetrahydrofolate to 5,10-methenyltetrahydrofolate and then the hydrolysis of 5,10-methenyltetrahydrofolate to 10-formyltetrahydrofolate. The protein is Bifunctional protein FolD of Thermus thermophilus (strain ATCC BAA-163 / DSM 7039 / HB27).